An 896-amino-acid chain; its full sequence is Translation initiation factor IF-2 (896 aa).

The interval 46-315 is disordered; sequence LAHLNRQHGG…FNKPAQPVER (270 aa). Over residues 99–247 the composition is skewed to basic and acidic residues; it reads SASEEQEREE…RKQQEKEDVH (149 aa). Positions 269-278 are enriched in basic residues; that stretch reads SRKRGKKRRR. Over residues 279–288 the composition is skewed to basic and acidic residues; that stretch reads KDEESDDTPR. A tr-type G domain is found at 396-565; the sequence is PRAPVVTVMG…LLQSEVLDLR (170 aa). The interval 405-412 is G1; sequence GHVDHGKT. 405 to 412 is a GTP binding site; sequence GHVDHGKT. Residues 430–434 are G2; sequence GITQH. A G3 region spans residues 451-454; sequence DTPG. GTP is bound by residues 451-455 and 505-508; these read DTPGH and NKMD. Residues 505–508 form a G4 region; it reads NKMD. Residues 541–543 are G5; that stretch reads SAH.

The protein belongs to the TRAFAC class translation factor GTPase superfamily. Classic translation factor GTPase family. IF-2 subfamily.

The protein localises to the cytoplasm. Its function is as follows. One of the essential components for the initiation of protein synthesis. Protects formylmethionyl-tRNA from spontaneous hydrolysis and promotes its binding to the 30S ribosomal subunits. Also involved in the hydrolysis of GTP during the formation of the 70S ribosomal complex. This chain is Translation initiation factor IF-2, found in Idiomarina loihiensis (strain ATCC BAA-735 / DSM 15497 / L2-TR).